Consider the following 409-residue polypeptide: Menaquinone reductase (409 aa).

FAD contacts are provided by residues 11–15 (GAGPA), 44–47 (CGDG), R101, V125, D288, and 300–301 (GI).

This sequence belongs to the geranylgeranyl reductase family. The cofactor is FAD.

The enzyme catalyses menaquinone-9 + AH2 = beta-dihydromenaquinone-9 + A. The protein operates within quinol/quinone metabolism; menaquinone biosynthesis. Catalyzes the reduction of a single double bond in the isoprenoid tail of menaquinone (MK-9) in M.smegmatis, likely the beta-isoprene unit, forming the predominant form of menaquinone found in mycobacteria, MK-9(II-H2). The sequence is that of Menaquinone reductase from Mycolicibacterium smegmatis (strain ATCC 700084 / mc(2)155) (Mycobacterium smegmatis).